The chain runs to 200 residues: Probable fatty acid desaturase MIMI_L630 (200 aa).

A run of 2 helical transmembrane segments spans residues 9-29 and 79-99; these read FIQI…YHWI and IGPL…FIMI.

This sequence belongs to the fatty acid desaturase CarF family.

The protein resides in the membrane. The chain is Probable fatty acid desaturase MIMI_L630 from Acanthamoeba polyphaga mimivirus (APMV).